Here is a 610-residue protein sequence, read N- to C-terminus: Elongation factor 4 (610 aa).

Residues 11–193 (KYIRNFSIVA…QIVTKIPAPA (183 aa)) form the tr-type G domain. GTP-binding positions include 23–28 (DHGKST) and 140–143 (NKID).

Belongs to the TRAFAC class translation factor GTPase superfamily. Classic translation factor GTPase family. LepA subfamily.

It localises to the cell membrane. It catalyses the reaction GTP + H2O = GDP + phosphate + H(+). In terms of biological role, required for accurate and efficient protein synthesis under certain stress conditions. May act as a fidelity factor of the translation reaction, by catalyzing a one-codon backward translocation of tRNAs on improperly translocated ribosomes. Back-translocation proceeds from a post-translocation (POST) complex to a pre-translocation (PRE) complex, thus giving elongation factor G a second chance to translocate the tRNAs correctly. Binds to ribosomes in a GTP-dependent manner. This chain is Elongation factor 4, found in Levilactobacillus brevis (strain ATCC 367 / BCRC 12310 / CIP 105137 / JCM 1170 / LMG 11437 / NCIMB 947 / NCTC 947) (Lactobacillus brevis).